Here is a 222-residue protein sequence, read N- to C-terminus: MKPDIKICGLKTPEAIDRALKRGATHIGFIFFEKSPRYIEPDLAAKLAEPARGKAKIVAVVVDPTNDELDEIVSLLKPDILQLHGNESPEHVLTIKALYGLPVMKVFSVRTAADLKRVEAYIGIADRFLFDAKAPKGSELPGGNGISFDWSLLSWLDGSIDYMLSGGLNKDNVANALANTTARGIDVSSGVESAPGVKSVAMIDEFFDAVEGADAPVMASGS.

It belongs to the TrpF family.

It catalyses the reaction N-(5-phospho-beta-D-ribosyl)anthranilate = 1-(2-carboxyphenylamino)-1-deoxy-D-ribulose 5-phosphate. Its pathway is amino-acid biosynthesis; L-tryptophan biosynthesis; L-tryptophan from chorismate: step 3/5. This is N-(5'-phosphoribosyl)anthranilate isomerase from Rhizobium etli (strain CIAT 652).